Consider the following 397-residue polypeptide: Elongation factor Tu (397 aa).

Residues 10 to 207 (LPHVNVGTIG…TLDSYIPEPE (198 aa)) enclose the tr-type G domain. The segment at 19–26 (GHVDHGKT) is G1. Residue 19–26 (GHVDHGKT) coordinates GTP. Mg(2+) is bound at residue T26. The tract at residues 60-64 (GITIN) is G2. Residues 81-84 (DCPG) are G3. GTP contacts are provided by residues 81–85 (DCPGH) and 136–139 (NKAD). Residues 136–139 (NKAD) form a G4 region. A G5 region spans residues 174–176 (SAR).

The protein belongs to the TRAFAC class translation factor GTPase superfamily. Classic translation factor GTPase family. EF-Tu/EF-1A subfamily. Monomer.

Its subcellular location is the cytoplasm. The catalysed reaction is GTP + H2O = GDP + phosphate + H(+). Its function is as follows. GTP hydrolase that promotes the GTP-dependent binding of aminoacyl-tRNA to the A-site of ribosomes during protein biosynthesis. The sequence is that of Elongation factor Tu from Pseudomonas fluorescens (strain Pf0-1).